The chain runs to 97 residues: Scorpine-like peptide Ev37 (97 aa).

The N-terminal stretch at 1–19 is a signal peptide; it reads MNSKLTVIVLLALITIASC. The BetaSPN-type CS-alpha/beta domain occupies 55–95; that stretch reads QNLCAFNVDTVGMCDADCKRQGKAKGVCHGTKCKCDVELSY. Disulfide bonds link Cys58-Cys82, Cys68-Cys87, and Cys72-Cys89.

This sequence belongs to the long chain scorpion toxin family. Class 3 subfamily. As to expression, expressed by the venom gland.

It localises to the secreted. Selectively inhibits Kv1.3/KCNA3 channel (IC(50)=0.95 uM). Both N-terminal and C-terminal domains are likely involved in the interaction with Kv1.3/KCNA3, since neither its N-terminal domain (1-36) nor its C-terminal domain (37-78) block Kv1.3/KCNA3 channel. In Euscorpiops validus (Scorpion), this protein is Scorpine-like peptide Ev37.